The sequence spans 431 residues: Glucose-1-phosphate adenylyltransferase (431 aa).

K39 is a beta-D-fructose 1,6-bisphosphate binding site. Residues R40, H46, and R52 each coordinate AMP. Residues Y114, G179, 194 to 195, and S212 each bind alpha-D-glucose 1-phosphate; that span reads EK. The AMP site is built by E370 and R386. Beta-D-fructose 1,6-bisphosphate-binding positions include 419 to 423 and 429 to 431; these read REMLR and QER.

It belongs to the bacterial/plant glucose-1-phosphate adenylyltransferase family. Homotetramer.

It carries out the reaction alpha-D-glucose 1-phosphate + ATP + H(+) = ADP-alpha-D-glucose + diphosphate. The protein operates within glycan biosynthesis; glycogen biosynthesis. Allosterically activated by fructose-1,6-bisphosphate (F16BP) and inhibited by AMP. Involved in the biosynthesis of ADP-glucose, a building block required for the elongation reactions to produce glycogen. Catalyzes the reaction between ATP and alpha-D-glucose 1-phosphate (G1P) to produce pyrophosphate and ADP-Glc. This Salmonella typhi protein is Glucose-1-phosphate adenylyltransferase.